The sequence spans 308 residues: Acetyl-coenzyme A carboxylase carboxyl transferase subunit beta (308 aa).

The CoA carboxyltransferase N-terminal domain occupies Leu-26 to Leu-295.

Belongs to the AccD/PCCB family. As to quaternary structure, acetyl-CoA carboxylase is a heterohexamer composed of biotin carboxyl carrier protein (AccB), biotin carboxylase (AccC) and two subunits each of ACCase subunit alpha (AccA) and ACCase subunit beta (AccD).

The protein resides in the cytoplasm. The catalysed reaction is N(6)-carboxybiotinyl-L-lysyl-[protein] + acetyl-CoA = N(6)-biotinyl-L-lysyl-[protein] + malonyl-CoA. It participates in lipid metabolism; malonyl-CoA biosynthesis; malonyl-CoA from acetyl-CoA: step 1/1. Its function is as follows. Component of the acetyl coenzyme A carboxylase (ACC) complex. Biotin carboxylase (BC) catalyzes the carboxylation of biotin on its carrier protein (BCCP) and then the CO(2) group is transferred by the transcarboxylase to acetyl-CoA to form malonyl-CoA. This is Acetyl-coenzyme A carboxylase carboxyl transferase subunit beta from Mesorhizobium japonicum (strain LMG 29417 / CECT 9101 / MAFF 303099) (Mesorhizobium loti (strain MAFF 303099)).